We begin with the raw amino-acid sequence, 395 residues long: LIM/homeobox protein Lhx3 (395 aa).

LIM zinc-binding domains lie at 28–78 (CAGC…CKED) and 87–141 (CAAC…CKAD). A DNA-binding region (homeobox) is located at residues 154-213 (AKRPRTTITAKQLETLKNAYNNSPKPARHVREQLSSETGLDMRVVQVWFQNRRAKEKRLK). Disordered regions lie at residues 209-325 (EKRL…LQAL) and 348-395 (GGQG…HAQF). Residues 257-276 (DEPSMSEMSHSNGIYSNLSE) are compositionally biased toward polar residues.

The protein resides in the nucleus. In terms of biological role, transcription factor. Defines subclasses of motoneurons that segregate into columns in the spinal cord and select distinct axon pathways. Acts in conjunction with LIM-1, ISL-1 and ISL-2. This Gallus gallus (Chicken) protein is LIM/homeobox protein Lhx3 (LHX3).